We begin with the raw amino-acid sequence, 257 residues long: Small ribosomal subunit protein uS2 (257 aa).

It belongs to the universal ribosomal protein uS2 family.

This is Small ribosomal subunit protein uS2 from Trichlorobacter lovleyi (strain ATCC BAA-1151 / DSM 17278 / SZ) (Geobacter lovleyi).